We begin with the raw amino-acid sequence, 915 residues long: Transferrin-binding protein A (915 aa).

An N-terminal signal peptide occupies residues 1-24; it reads MQQQHLFRFNILCLSLMTALPAYA. Residues 25–187 are Periplasmic-facing; that stretch reads ENVQAGQAQE…ADDVIGEGRQ (163 aa). The short motif at 38–45 is the TonB box element; it reads DTIQVKAK. Positions 51 to 176 constitute a TBDR plug domain; it reads RDNEVTGLGK…LAGSVAFQTK (126 aa). Residues 121–139 form a plug loop, interacts with transferrin region; sequence SYTAQAALGGTRTAGSSGA. Positions 187–915 constitute a TBDR beta-barrel domain; it reads QWGIQSKTAY…NYTFSLEMKF (729 aa). A beta stranded membrane pass occupies residues 188–197; the sequence is WGIQSKTAYS. At 198–203 the chain is on the extracellular side; that stretch reads GKNRGL. A beta stranded membrane pass occupies residues 204 to 213; the sequence is TQSIALAGRI. The Periplasmic portion of the chain corresponds to 214–215; it reads GG. The chain crosses the membrane as a beta stranded span at residues 216 to 225; sequence AEALLIHTGR. Residues 226–309 lie on the Extracellular side of the membrane; the sequence is RAGEIRAHED…FLADPLSYES (84 aa). A beta stranded transmembrane segment spans residues 310 to 319; it reads RSWLFRPGFR. Over 320–324 the chain is Periplasmic; sequence FENKR. Residues 325–334 traverse the membrane as a beta stranded segment; sequence HYIGGILEHT. The Extracellular segment spans residues 335-406; it reads QQTFDTRDMT…VFYDETHTKS (72 aa). The interval 351 to 361 is L3 helix finger, interacts with transferrin; the sequence is KAVFDANKKQA. Residues 407 to 415 form a beta stranded membrane-spanning segment; it reads RYGLEYVYT. Residues 416–423 are Periplasmic-facing; the sequence is NADKDTWA. A beta stranded transmembrane segment spans residues 424 to 433; it reads DYARLSYDRQ. At 434-478 the chain is on the extracellular side; the sequence is GIGLDNHFQQTHCSADGSDKYCRPSADKPFSYYKSDRVIYGESHR. Residues 479–488 form a beta stranded membrane-spanning segment; that stretch reads LLQAAFKKSF. The Periplasmic segment spans residues 489–494; it reads DTAKIR. Residues 495–504 traverse the membrane as a beta stranded segment; it reads HNLSVNLGFD. The Extracellular portion of the chain corresponds to 505 to 583; the sequence is RFGSNLRHQD…PRSINGKSYY (79 aa). The segment at 523–542 is disordered; that stretch reads AYSSNTPPQNNGKKISPNGS. A beta stranded membrane pass occupies residues 584–592; it reads AAVRDNVRL. Residues 593-594 are Periplasmic-facing; that stretch reads GR. The chain crosses the membrane as a beta stranded span at residues 595-603; it reads WADVGAGLR. Topologically, residues 604–623 are extracellular; it reads YDYRSTHSDDGSVSTGTHRT. Residues 624-633 traverse the membrane as a beta stranded segment; the sequence is LSWNAGIVLK. At 634–637 the chain is on the periplasmic side; that stretch reads PTDW. A beta stranded membrane pass occupies residues 638–647; it reads LDLTYRTSTG. Over 648-675 the chain is Extracellular; sequence FRLPSFAEMYGWRAGVQSKAVKIDPEKS. A beta stranded transmembrane segment spans residues 676–685; the sequence is FNKEAGIVFK. Residues 686-689 lie on the Periplasmic side of the membrane; the sequence is GDFG. Residues 690-699 form a beta stranded membrane-spanning segment; it reads NLEASWFNNA. At 700–733 the chain is on the extracellular side; it reads YRDLIVRGYEAQIKDGKEEAKGDPAYLNAQSARI. The chain crosses the membrane as a beta stranded span at residues 734 to 743; that stretch reads TGINILGKID. Topologically, residues 744–755 are periplasmic; that stretch reads WNGVWDKLPEGW. A beta stranded transmembrane segment spans residues 756–765; sequence YSTFAYNRVR. At 766–790 the chain is on the extracellular side; it reads VRDIKKRADRTDIQSHLFDAIQPSR. A beta stranded membrane pass occupies residues 791-799; the sequence is YVVGLGYDQ. At 800 to 802 the chain is on the periplasmic side; it reads PEG. Residues 803–811 form a beta stranded membrane-spanning segment; it reads KWGVNGMLT. At 812-845 the chain is on the extracellular side; that stretch reads YSKAKEITELLGSRALLNGNSRNTKATARRTRPW. Residues 846–855 traverse the membrane as a beta stranded segment; the sequence is YIVDVSGYYT. Topologically, residues 856–860 are periplasmic; the sequence is VKKHF. Residues 861 to 870 traverse the membrane as a beta stranded segment; the sequence is TLRAGVYNLL. Topologically, residues 871–905 are extracellular; that stretch reads NYRYVTWENVRQTAGGAVNQHKNVGVYNRYAAPGR. Residues 898–915 carry the TonB C-terminal box motif; it reads NRYAAPGRNYTFSLEMKF. Residues 906–915 form a beta stranded membrane-spanning segment; the sequence is NYTFSLEMKF.

This sequence belongs to the TonB-dependent receptor family. Binds both human apo- and holo-transferrin (TF), via the TF C-terminus. Forms a large complex with TF and TbpB.

It localises to the cell outer membrane. Neisseria acquires iron by extracting it from serum transferrin (TF) in its human host. Acts as a TF receptor and is required for TF utilization. Binds both apo- and holo-TF, via the TF C-terminus. The protein is Transferrin-binding protein A of Neisseria meningitidis serogroup B (strain ATCC BAA-335 / MC58).